A 92-amino-acid polypeptide reads, in one-letter code: Large ribosomal subunit protein bL25 (92 aa).

It belongs to the bacterial ribosomal protein bL25 family. Part of the 50S ribosomal subunit; part of the 5S rRNA/L5/L18/L25 subcomplex. Contacts the 5S rRNA. Binds to the 5S rRNA independently of L5 and L18.

In terms of biological role, this is one of the proteins that binds to the 5S RNA in the ribosome where it forms part of the central protuberance. The protein is Large ribosomal subunit protein bL25 of Photobacterium profundum (strain SS9).